The primary structure comprises 212 residues: Glycerol-3-phosphate acyltransferase (212 aa).

The next 5 helical transmembrane spans lie at 10-30 (FAAL…AVVV), 90-110 (GYGL…SLGF), 124-144 (FAVS…VAVV), 150-170 (LAAL…GGTI), and 171-191 (WPLN…LFYR).

The protein belongs to the PlsY family. As to quaternary structure, probably interacts with PlsX.

The protein resides in the cell inner membrane. It catalyses the reaction an acyl phosphate + sn-glycerol 3-phosphate = a 1-acyl-sn-glycero-3-phosphate + phosphate. It functions in the pathway lipid metabolism; phospholipid metabolism. Functionally, catalyzes the transfer of an acyl group from acyl-phosphate (acyl-PO(4)) to glycerol-3-phosphate (G3P) to form lysophosphatidic acid (LPA). This enzyme utilizes acyl-phosphate as fatty acyl donor, but not acyl-CoA or acyl-ACP. This chain is Glycerol-3-phosphate acyltransferase, found in Bordetella avium (strain 197N).